The chain runs to 265 residues: Hydroxyethylthiazole kinase (265 aa).

A substrate-binding site is contributed by Met50. ATP-binding residues include Arg125 and Thr171. Gly198 lines the substrate pocket.

The protein belongs to the Thz kinase family. It depends on Mg(2+) as a cofactor.

The catalysed reaction is 5-(2-hydroxyethyl)-4-methylthiazole + ATP = 4-methyl-5-(2-phosphooxyethyl)-thiazole + ADP + H(+). It participates in cofactor biosynthesis; thiamine diphosphate biosynthesis; 4-methyl-5-(2-phosphoethyl)-thiazole from 5-(2-hydroxyethyl)-4-methylthiazole: step 1/1. In terms of biological role, catalyzes the phosphorylation of the hydroxyl group of 4-methyl-5-beta-hydroxyethylthiazole (THZ). The polypeptide is Hydroxyethylthiazole kinase (Salmonella paratyphi B (strain ATCC BAA-1250 / SPB7)).